Here is a 254-residue protein sequence, read N- to C-terminus: Zinc transporter GufA (254 aa).

7 consecutive transmembrane segments (helical) span residues 4 to 24 (GLVASLLAGTATGLGALPVLV), 74 to 94 (VAAGVLLGGLFLRVWHDLMPH), 112 to 132 (ALLFVLAMTLHNFPEGLAVGV), 143 to 163 (LSVALGIGAQNIPEGLVVALA), 176 to 196 (FLALLTGMVEPVGALFGVLAL), 198 to 218 (LSSALLPWGLAFAGGAMLYVI), and 234 to 254 (EATTGLMWGFVLALVLDMSLG). Zn(2+) is bound by residues asparagine 123, glutamate 126, glutamine 152, asparagine 153, glutamate 156, and glutamate 185.

It belongs to the ZIP transporter (TC 2.A.5) family. As to quaternary structure, homodimer.

It localises to the cell inner membrane. In terms of biological role, mediates the uptake of Zn(2+). This chain is Zinc transporter GufA (gufA), found in Myxococcus xanthus.